The following is a 305-amino-acid chain: UDP-3-O-acyl-N-acetylglucosamine deacetylase (305 aa).

3 residues coordinate Zn(2+): His78, His237, and Asp241. His264 (proton donor) is an active-site residue.

Belongs to the LpxC family. The cofactor is Zn(2+).

It catalyses the reaction a UDP-3-O-[(3R)-3-hydroxyacyl]-N-acetyl-alpha-D-glucosamine + H2O = a UDP-3-O-[(3R)-3-hydroxyacyl]-alpha-D-glucosamine + acetate. The protein operates within glycolipid biosynthesis; lipid IV(A) biosynthesis; lipid IV(A) from (3R)-3-hydroxytetradecanoyl-[acyl-carrier-protein] and UDP-N-acetyl-alpha-D-glucosamine: step 2/6. Functionally, catalyzes the hydrolysis of UDP-3-O-myristoyl-N-acetylglucosamine to form UDP-3-O-myristoylglucosamine and acetate, the committed step in lipid A biosynthesis. This Cupriavidus metallidurans (strain ATCC 43123 / DSM 2839 / NBRC 102507 / CH34) (Ralstonia metallidurans) protein is UDP-3-O-acyl-N-acetylglucosamine deacetylase.